An 827-amino-acid chain; its full sequence is Leucine--tRNA ligase (827 aa).

Positions 42–52 match the 'HIGH' region motif; the sequence is PYPSGKLHMGH. Positions 581-585 match the 'KMSKS' region motif; sequence KMSKS. Lys584 serves as a coordination point for ATP.

Belongs to the class-I aminoacyl-tRNA synthetase family.

The protein localises to the cytoplasm. The enzyme catalyses tRNA(Leu) + L-leucine + ATP = L-leucyl-tRNA(Leu) + AMP + diphosphate. This is Leucine--tRNA ligase from Desulforamulus reducens (strain ATCC BAA-1160 / DSM 100696 / MI-1) (Desulfotomaculum reducens).